The chain runs to 580 residues: DNA ligase B (580 aa).

K135 (N6-AMP-lysine intermediate) is an active-site residue.

This sequence belongs to the NAD-dependent DNA ligase family. LigB subfamily.

The catalysed reaction is NAD(+) + (deoxyribonucleotide)n-3'-hydroxyl + 5'-phospho-(deoxyribonucleotide)m = (deoxyribonucleotide)n+m + AMP + beta-nicotinamide D-nucleotide.. In terms of biological role, catalyzes the formation of phosphodiester linkages between 5'-phosphoryl and 3'-hydroxyl groups in double-stranded DNA using NAD as a coenzyme and as the energy source for the reaction. This chain is DNA ligase B, found in Photorhabdus laumondii subsp. laumondii (strain DSM 15139 / CIP 105565 / TT01) (Photorhabdus luminescens subsp. laumondii).